Consider the following 387-residue polypeptide: WD repeat-containing protein 89 (387 aa).

6 WD repeats span residues K21 to E65, G68 to V107, G112 to S156, T168 to A208, N214 to P254, and G319 to T358.

This Pongo abelii (Sumatran orangutan) protein is WD repeat-containing protein 89 (WDR89).